The chain runs to 46 residues: Homeobox protein Hox-D4 (46 aa).

A DNA-binding region (homeobox) is located at residues 1–46 (VNSNYTGGEPKRSRTAYTRQQVLELEKEFLFNRYLTRRRRIQHTLT).

The protein belongs to the Antp homeobox family. Deformed subfamily. In terms of assembly, forms a DNA-binding heterodimer with transcription factor PBX1.

Its subcellular location is the nucleus. Its function is as follows. Sequence-specific transcription factor which is part of a developmental regulatory system that provides cells with specific positional identities on the anterior-posterior axis. The sequence is that of Homeobox protein Hox-D4 (HOXD4) from Ovis aries (Sheep).